A 288-amino-acid polypeptide reads, in one-letter code: ATP synthase gamma chain (288 aa).

The protein belongs to the ATPase gamma chain family. As to quaternary structure, F-type ATPases have 2 components, CF(1) - the catalytic core - and CF(0) - the membrane proton channel. CF(1) has five subunits: alpha(3), beta(3), gamma(1), delta(1), epsilon(1). CF(0) has three main subunits: a, b and c.

It is found in the cell inner membrane. Produces ATP from ADP in the presence of a proton gradient across the membrane. The gamma chain is believed to be important in regulating ATPase activity and the flow of protons through the CF(0) complex. The polypeptide is ATP synthase gamma chain (Aliivibrio salmonicida (strain LFI1238) (Vibrio salmonicida (strain LFI1238))).